Consider the following 317-residue polypeptide: Cytochrome f (317 aa).

The signal sequence occupies residues 1 to 34 (MKGLKNQIMKKTSLFICTLLFILSIVFYPKITFA). Tyr35, Cys55, Cys58, and His59 together coordinate heme. The chain crosses the membrane as a helical span at residues 284–304 (VIGLIAFFIGVGLTQILLVLK).

This sequence belongs to the cytochrome f family. The 4 large subunits of the cytochrome b6-f complex are cytochrome b6, subunit IV (17 kDa polypeptide, PetD), cytochrome f and the Rieske protein, while the 4 small subunits are PetG, PetL, PetM and PetN. The complex functions as a dimer. It depends on heme as a cofactor.

It localises to the cellular thylakoid membrane. Its function is as follows. Component of the cytochrome b6-f complex, which mediates electron transfer between photosystem II (PSII) and photosystem I (PSI), cyclic electron flow around PSI, and state transitions. In Prochlorococcus marinus (strain MIT 9215), this protein is Cytochrome f.